Consider the following 66-residue polypeptide: Small ribosomal subunit protein bS21 (66 aa).

It belongs to the bacterial ribosomal protein bS21 family.

In Persephonella marina (strain DSM 14350 / EX-H1), this protein is Small ribosomal subunit protein bS21.